A 498-amino-acid polypeptide reads, in one-letter code: Glycerol kinase (498 aa).

Residue threonine 12 participates in ADP binding. 3 residues coordinate ATP: threonine 12, threonine 13, and serine 14. Position 12 (threonine 12) interacts with sn-glycerol 3-phosphate. An ADP-binding site is contributed by arginine 16. 4 residues coordinate sn-glycerol 3-phosphate: arginine 82, glutamate 83, tyrosine 134, and aspartate 243. Residues arginine 82, glutamate 83, tyrosine 134, aspartate 243, and glutamine 244 each contribute to the glycerol site. ADP contacts are provided by threonine 265 and glycine 308. ATP contacts are provided by threonine 265, glycine 308, glutamine 312, and glycine 409. Residues glycine 409 and asparagine 413 each coordinate ADP.

This sequence belongs to the FGGY kinase family. As to quaternary structure, homotetramer and homodimer (in equilibrium).

It catalyses the reaction glycerol + ATP = sn-glycerol 3-phosphate + ADP + H(+). It participates in polyol metabolism; glycerol degradation via glycerol kinase pathway; sn-glycerol 3-phosphate from glycerol: step 1/1. Activated by phosphorylation and inhibited by fructose 1,6-bisphosphate (FBP). Functionally, key enzyme in the regulation of glycerol uptake and metabolism. Catalyzes the phosphorylation of glycerol to yield sn-glycerol 3-phosphate. In Agathobacter rectalis (strain ATCC 33656 / DSM 3377 / JCM 17463 / KCTC 5835 / VPI 0990) (Eubacterium rectale), this protein is Glycerol kinase.